The following is a 451-amino-acid chain: Trigger factor (451 aa).

Positions 165–250 constitute a PPIase FKBP-type domain; the sequence is DDKLTIDFEG…LHQIQVREAL (86 aa).

Belongs to the FKBP-type PPIase family. Tig subfamily.

It localises to the cytoplasm. It carries out the reaction [protein]-peptidylproline (omega=180) = [protein]-peptidylproline (omega=0). Its function is as follows. Involved in protein export. Acts as a chaperone by maintaining the newly synthesized protein in an open conformation. Functions as a peptidyl-prolyl cis-trans isomerase. The chain is Trigger factor from Helicobacter pylori (strain P12).